The primary structure comprises 215 residues: Ribonuclease T (215 aa).

An Exonuclease domain is found at 20-194; the sequence is VVIDVETAGF…YDTMQTAKLF (175 aa). Mg(2+)-binding residues include Asp-23, Glu-25, His-181, and Asp-186. His-181 functions as the Proton donor/acceptor in the catalytic mechanism.

Belongs to the RNase T family. In terms of assembly, homodimer. The cofactor is Mg(2+).

Trims short 3' overhangs of a variety of RNA species, leaving a one or two nucleotide 3' overhang. Responsible for the end-turnover of tRNA: specifically removes the terminal AMP residue from uncharged tRNA (tRNA-C-C-A). Also appears to be involved in tRNA biosynthesis. In Yersinia enterocolitica serotype O:8 / biotype 1B (strain NCTC 13174 / 8081), this protein is Ribonuclease T.